A 475-amino-acid polypeptide reads, in one-letter code: Ribulose bisphosphate carboxylase large chain (475 aa).

A propeptide spanning residues 1 to 2 (MS) is cleaved from the precursor. Residue P3 is modified to N-acetylproline. K14 is subject to N6,N6,N6-trimethyllysine. Residues N123 and T173 each coordinate substrate. K175 functions as the Proton acceptor in the catalytic mechanism. Position 177 (K177) interacts with substrate. Mg(2+)-binding residues include K201, D203, and E204. K201 is subject to N6-carboxylysine. H294 functions as the Proton acceptor in the catalytic mechanism. The substrate site is built by R295, H327, and S379.

Belongs to the RuBisCO large chain family. Type I subfamily. Heterohexadecamer of 8 large chains and 8 small chains; disulfide-linked. The disulfide link is formed within the large subunit homodimers. Requires Mg(2+) as cofactor. In terms of processing, the disulfide bond which can form in the large chain dimeric partners within the hexadecamer appears to be associated with oxidative stress and protein turnover.

The protein resides in the plastid. Its subcellular location is the chloroplast. The enzyme catalyses 2 (2R)-3-phosphoglycerate + 2 H(+) = D-ribulose 1,5-bisphosphate + CO2 + H2O. It carries out the reaction D-ribulose 1,5-bisphosphate + O2 = 2-phosphoglycolate + (2R)-3-phosphoglycerate + 2 H(+). Functionally, ruBisCO catalyzes two reactions: the carboxylation of D-ribulose 1,5-bisphosphate, the primary event in carbon dioxide fixation, as well as the oxidative fragmentation of the pentose substrate in the photorespiration process. Both reactions occur simultaneously and in competition at the same active site. In Lotus japonicus (Lotus corniculatus var. japonicus), this protein is Ribulose bisphosphate carboxylase large chain.